A 452-amino-acid polypeptide reads, in one-letter code: Exodeoxyribonuclease 7 large subunit (452 aa).

Belongs to the XseA family. As to quaternary structure, heterooligomer composed of large and small subunits.

Its subcellular location is the cytoplasm. The enzyme catalyses Exonucleolytic cleavage in either 5'- to 3'- or 3'- to 5'-direction to yield nucleoside 5'-phosphates.. Functionally, bidirectionally degrades single-stranded DNA into large acid-insoluble oligonucleotides, which are then degraded further into small acid-soluble oligonucleotides. In Bacillus cereus (strain B4264), this protein is Exodeoxyribonuclease 7 large subunit.